Reading from the N-terminus, the 85-residue chain is Small ribosomal subunit protein bS16 (85 aa).

The protein belongs to the bacterial ribosomal protein bS16 family.

This Metamycoplasma arthritidis (strain 158L3-1) (Mycoplasma arthritidis) protein is Small ribosomal subunit protein bS16.